The primary structure comprises 336 residues: UDP-3-O-acylglucosamine N-acyltransferase (336 aa).

The active-site Proton acceptor is histidine 236.

Belongs to the transferase hexapeptide repeat family. LpxD subfamily. As to quaternary structure, homotrimer.

It catalyses the reaction a UDP-3-O-[(3R)-3-hydroxyacyl]-alpha-D-glucosamine + a (3R)-hydroxyacyl-[ACP] = a UDP-2-N,3-O-bis[(3R)-3-hydroxyacyl]-alpha-D-glucosamine + holo-[ACP] + H(+). It functions in the pathway bacterial outer membrane biogenesis; LPS lipid A biosynthesis. Functionally, catalyzes the N-acylation of UDP-3-O-acylglucosamine using 3-hydroxyacyl-ACP as the acyl donor. Is involved in the biosynthesis of lipid A, a phosphorylated glycolipid that anchors the lipopolysaccharide to the outer membrane of the cell. The protein is UDP-3-O-acylglucosamine N-acyltransferase of Aromatoleum aromaticum (strain DSM 19018 / LMG 30748 / EbN1) (Azoarcus sp. (strain EbN1)).